Consider the following 93-residue polypeptide: Small ribosomal subunit protein uS19 (93 aa).

This sequence belongs to the universal ribosomal protein uS19 family.

Functionally, protein S19 forms a complex with S13 that binds strongly to the 16S ribosomal RNA. The sequence is that of Small ribosomal subunit protein uS19 from Wolinella succinogenes (strain ATCC 29543 / DSM 1740 / CCUG 13145 / JCM 31913 / LMG 7466 / NCTC 11488 / FDC 602W) (Vibrio succinogenes).